We begin with the raw amino-acid sequence, 312 residues long: Glycine--tRNA ligase alpha subunit (312 aa).

Belongs to the class-II aminoacyl-tRNA synthetase family. Tetramer of two alpha and two beta subunits.

Its subcellular location is the cytoplasm. The catalysed reaction is tRNA(Gly) + glycine + ATP = glycyl-tRNA(Gly) + AMP + diphosphate. The polypeptide is Glycine--tRNA ligase alpha subunit (Methylobacillus flagellatus (strain ATCC 51484 / DSM 6875 / VKM B-1610 / KT)).